We begin with the raw amino-acid sequence, 459 residues long: Arginine biosynthesis bifunctional protein ArgJ, mitochondrial (459 aa).

Substrate is bound by residues Thr187, Lys216, Thr227, Glu314, Asn454, and Thr459. Thr227 acts as the Nucleophile in catalysis.

The protein belongs to the ArgJ family. In terms of assembly, heterodimer of an alpha and a beta chain. The alpha and beta chains are autoproteolytically processed from a single precursor protein within the mitochondrion.

It localises to the mitochondrion matrix. The catalysed reaction is N(2)-acetyl-L-ornithine + L-glutamate = N-acetyl-L-glutamate + L-ornithine. It carries out the reaction L-glutamate + acetyl-CoA = N-acetyl-L-glutamate + CoA + H(+). It functions in the pathway amino-acid biosynthesis; L-arginine biosynthesis; L-ornithine and N-acetyl-L-glutamate from L-glutamate and N(2)-acetyl-L-ornithine (cyclic): step 1/1. It participates in amino-acid biosynthesis; L-arginine biosynthesis; N(2)-acetyl-L-ornithine from L-glutamate: step 1/4. Its function is as follows. Catalyzes two activities which are involved in the cyclic version of arginine biosynthesis: the synthesis of acetylglutamate from glutamate and acetyl-CoA, and of ornithine by transacetylation between acetylornithine and glutamate. This chain is Arginine biosynthesis bifunctional protein ArgJ, mitochondrial, found in Uncinocarpus reesii (strain UAMH 1704).